A 247-amino-acid chain; its full sequence is Putative 2-succinyl-6-hydroxy-2,4-cyclohexadiene-1-carboxylate synthase (247 aa).

The region spanning 4–229 (IIFLHGLLGT…CAGHNSHLEN (226 aa)) is the AB hydrolase-1 domain.

Belongs to the AB hydrolase superfamily. MenH family. In terms of assembly, monomer.

It carries out the reaction 5-enolpyruvoyl-6-hydroxy-2-succinyl-cyclohex-3-ene-1-carboxylate = (1R,6R)-6-hydroxy-2-succinyl-cyclohexa-2,4-diene-1-carboxylate + pyruvate. It functions in the pathway quinol/quinone metabolism; 1,4-dihydroxy-2-naphthoate biosynthesis; 1,4-dihydroxy-2-naphthoate from chorismate: step 3/7. It participates in quinol/quinone metabolism; menaquinone biosynthesis. Its function is as follows. Catalyzes a proton abstraction reaction that results in 2,5-elimination of pyruvate from 2-succinyl-5-enolpyruvyl-6-hydroxy-3-cyclohexene-1-carboxylate (SEPHCHC) and the formation of 2-succinyl-6-hydroxy-2,4-cyclohexadiene-1-carboxylate (SHCHC). The sequence is that of Putative 2-succinyl-6-hydroxy-2,4-cyclohexadiene-1-carboxylate synthase from Haemophilus influenzae (strain ATCC 51907 / DSM 11121 / KW20 / Rd).